A 338-amino-acid polypeptide reads, in one-letter code: Solute carrier family 35 member G5 (338 aa).

The tract at residues 1-27 is disordered; that stretch reads MAGSHPYFNLPDSTHPSPPSAPPSLRW. 9 helical membrane passes run 37–57, 67–87, 102–122, 160–180, 190–210, 221–241, 250–270, 281–301, and 305–325; these read TNGL…VGPL, LPSL…ALLL, GWAC…YSAV, CGLL…LWTL, TLGY…LLVY, TVAF…LFVL, LLSW…FTCV, LVCA…YYML, and VALS…IITA. One can recognise an EamA 1 domain in the interval 49 to 174; that stretch reads LPAGFVGPLS…SILGLIIILG (126 aa). The region spanning 272 to 325 is the EamA 2 domain; it reads YAVTKAHPALVCAVLHSEVVVALILQYYMLHETVALSDIMGAGVVLGSIAIITA.

The protein belongs to the SLC35G solute transporter family. Expressed in placenta and testis.

Its subcellular location is the membrane. The chain is Solute carrier family 35 member G5 (SLC35G5) from Homo sapiens (Human).